The chain runs to 637 residues: Nuclear receptor-binding protein homolog (637 aa).

Residues 1 to 14 are compositionally biased toward polar residues; sequence MSNSQANAGISGST. Disordered stretches follow at residues 1-60 and 74-99; these read MSNS…TADA and SEGV…ILEE. Residues 36-46 are compositionally biased toward low complexity; the sequence is PAATPPSQSTQ. Over residues 88–98 the composition is skewed to acidic residues; sequence DDSEDESEILE. Positions 109 to 375 constitute a Protein kinase domain; the sequence is REEVDQRDVP…ANDLLFHPLL (267 aa). 2 disordered regions span residues 465-489 and 617-637; these read PNFR…EPVD and PQEQ…TTSN. Ser473, Ser479, and Ser482 each carry phosphoserine. Thr484 is subject to Phosphothreonine.

It belongs to the protein kinase superfamily. Ser/Thr protein kinase family.

The protein localises to the cytoplasm. It is found in the cell cortex. May play a role in subcellular trafficking between the endoplasmic reticulum and Golgi apparatus. The sequence is that of Nuclear receptor-binding protein homolog from Drosophila melanogaster (Fruit fly).